Consider the following 424-residue polypeptide: Histidine--tRNA ligase (424 aa).

Belongs to the class-II aminoacyl-tRNA synthetase family. In terms of assembly, homodimer.

It localises to the cytoplasm. The catalysed reaction is tRNA(His) + L-histidine + ATP = L-histidyl-tRNA(His) + AMP + diphosphate + H(+). This is Histidine--tRNA ligase from Staphylococcus epidermidis (strain ATCC 12228 / FDA PCI 1200).